Consider the following 511-residue polypeptide: MVLLAAAVCTKAGKAIVSRQFVEMTRTRIEGLLAAFPKLMNTGKQHTFVETESVRYVYQPMEKLYMVLITTKNSNILEDLETLRLFSRVIPEYCRALEENEISEHCFDLIFAFDEIVALGYRENVNLAQIRTFTEMDSHEEKVFRAVRETQEREAKAEMRRKAKELQQARRDAERQGKKAPGFGGFGSSAVSGGSTAAMITETIIETDKPKVAPAPARPSGPSKALKLGAKGKEVDNFVDKLKSEGETIMSSSMGKRTSEASKMHAPPINMESVHMKIEEKITLTCGRDGGLQNMELHGMIMLRISDDKYGRIRLHVENEDKKGVQLQTHPNVDKKLFTAESLIGLKNPEKSFPVNSDVGVLKWRLQTTEESFIPLTINCWPSESGNGCDVNIEYELQEDNLELNDVVITIPLPSGVGAPVIGEIDGEYRHDSRRNTLEWCLPVIDAKNKSGSLEFSIAGQPNDFFPVQVSFVSKKNYCNIQVTKVTQVDGNSPVRFSTETTFLVDKYEIL.

Residues 167–177 (QQARRDAERQG) are compositionally biased toward basic and acidic residues. A disordered region spans residues 167–188 (QQARRDAERQGKKAPGFGGFGS). A Phosphoserine modification is found at Ser223. Residues Lys233 and Lys241 each carry the N6-acetyllysine modification. Ser244 carries the phosphoserine modification. Residues 271–511 (MESVHMKIEE…TFLVDKYEIL (241 aa)) form the MHD domain. Lys309 and Lys351 each carry N6-acetyllysine. Residue Ser493 is modified to Phosphoserine.

This sequence belongs to the adaptor complexes medium subunit family. Delta-COP subfamily. As to quaternary structure, oligomeric complex that consists of at least the alpha, beta, beta', gamma, delta, epsilon and zeta subunits.

It is found in the cytoplasm. The protein resides in the golgi apparatus membrane. The protein localises to the cytoplasmic vesicle. Its subcellular location is the COPI-coated vesicle membrane. The coatomer is a cytosolic protein complex that binds to dilysine motifs and reversibly associates with Golgi non-clathrin-coated vesicles, which further mediate biosynthetic protein transport from the ER, via the Golgi up to the trans Golgi network. Coatomer complex is required for budding from Golgi membranes, and is essential for the retrograde Golgi-to-ER transport of dilysine-tagged proteins. In mammals, the coatomer can only be recruited by membranes associated to ADP-ribosylation factors (ARFs), which are small GTP-binding proteins; the complex also influences the Golgi structural integrity, as well as the processing, activity, and endocytic recycling of LDL receptors. The polypeptide is Coatomer subunit delta (ARCN1) (Pongo abelii (Sumatran orangutan)).